A 110-amino-acid polypeptide reads, in one-letter code: Nucleoid-associated protein CbuK_1603 (110 aa).

This sequence belongs to the YbaB/EbfC family. In terms of assembly, homodimer.

The protein localises to the cytoplasm. It localises to the nucleoid. Functionally, binds to DNA and alters its conformation. May be involved in regulation of gene expression, nucleoid organization and DNA protection. The protein is Nucleoid-associated protein CbuK_1603 of Coxiella burnetii (strain CbuK_Q154) (Coxiella burnetii (strain Q154)).